Consider the following 360-residue polypeptide: Transcription factor MYB39 (360 aa).

HTH myb-type domains lie at 10 to 62 (DKGV…MNYL) and 63 to 117 (RPDI…RKKL). 2 DNA-binding regions (H-T-H motif) span residues 38–62 (WRSLPKLAGLNRCGKSCRLRWMNYL) and 90–113 (WSKIAGHLPGRTDNEIKNYWNTHM). Residues 299–324 (PSTGSVSVSPETTSLNHPSTAQHSSG) form a disordered region.

The protein localises to the nucleus. This chain is Transcription factor MYB39 (MYB39), found in Arabidopsis thaliana (Mouse-ear cress).